The chain runs to 548 residues: Chaperonin GroEL (548 aa).

ATP contacts are provided by residues 30–33, Lys51, 87–91, Gly415, and Asp495; these read TLGP and DGTTT.

Belongs to the chaperonin (HSP60) family. Forms a cylinder of 14 subunits composed of two heptameric rings stacked back-to-back. Interacts with the co-chaperonin GroES.

The protein resides in the cytoplasm. It carries out the reaction ATP + H2O + a folded polypeptide = ADP + phosphate + an unfolded polypeptide.. Its function is as follows. Together with its co-chaperonin GroES, plays an essential role in assisting protein folding. The GroEL-GroES system forms a nano-cage that allows encapsulation of the non-native substrate proteins and provides a physical environment optimized to promote and accelerate protein folding. In Pseudoalteromonas atlantica (strain T6c / ATCC BAA-1087), this protein is Chaperonin GroEL.